The sequence spans 119 residues: Large ribosomal subunit protein uL18 (119 aa).

Positions 54–76 are disordered; it reads LTSASTLADDVEGETPTEESRSV.

The protein belongs to the universal ribosomal protein uL18 family. As to quaternary structure, part of the 50S ribosomal subunit; part of the 5S rRNA/L5/L18/L25 subcomplex. Contacts the 5S and 23S rRNAs.

Functionally, this is one of the proteins that bind and probably mediate the attachment of the 5S RNA into the large ribosomal subunit, where it forms part of the central protuberance. The polypeptide is Large ribosomal subunit protein uL18 (Salinibacter ruber (strain DSM 13855 / M31)).